We begin with the raw amino-acid sequence, 337 residues long: Ketol-acid reductoisomerase (NADP(+)) (337 aa).

The region spanning 3–183 (VEMFYDADAD…GGARAGVIKT (181 aa)) is the KARI N-terminal Rossmann domain. NADP(+) contacts are provided by residues 26–29 (YGSQ), K49, S52, S54, and 84–87 (DTAQ). H109 is an active-site residue. G135 provides a ligand contact to NADP(+). Positions 184–329 (TFKDETETDL…KKLRDLMSWV (146 aa)) constitute a KARI C-terminal knotted domain. D192, E196, E228, and E232 together coordinate Mg(2+). S253 is a binding site for substrate.

The protein belongs to the ketol-acid reductoisomerase family. The cofactor is Mg(2+).

The catalysed reaction is (2R)-2,3-dihydroxy-3-methylbutanoate + NADP(+) = (2S)-2-acetolactate + NADPH + H(+). The enzyme catalyses (2R,3R)-2,3-dihydroxy-3-methylpentanoate + NADP(+) = (S)-2-ethyl-2-hydroxy-3-oxobutanoate + NADPH + H(+). It functions in the pathway amino-acid biosynthesis; L-isoleucine biosynthesis; L-isoleucine from 2-oxobutanoate: step 2/4. The protein operates within amino-acid biosynthesis; L-valine biosynthesis; L-valine from pyruvate: step 2/4. In terms of biological role, involved in the biosynthesis of branched-chain amino acids (BCAA). Catalyzes an alkyl-migration followed by a ketol-acid reduction of (S)-2-acetolactate (S2AL) to yield (R)-2,3-dihydroxy-isovalerate. In the isomerase reaction, S2AL is rearranged via a Mg-dependent methyl migration to produce 3-hydroxy-3-methyl-2-ketobutyrate (HMKB). In the reductase reaction, this 2-ketoacid undergoes a metal-dependent reduction by NADPH to yield (R)-2,3-dihydroxy-isovalerate. This chain is Ketol-acid reductoisomerase (NADP(+)), found in Mycolicibacterium gilvum (strain PYR-GCK) (Mycobacterium gilvum (strain PYR-GCK)).